Reading from the N-terminus, the 600-residue chain is Glutamine--fructose-6-phosphate aminotransferase [isomerizing] (600 aa).

C2 (nucleophile; for GATase activity) is an active-site residue. One can recognise a Glutamine amidotransferase type-2 domain in the interval 2-217; sequence CGIVGYIGQL…DKEMVIVTDD (216 aa). SIS domains lie at 283–422 and 452–590; these read IAAA…KNGI and IARE…VDKP. The active-site For Fru-6P isomerization activity is the K595.

In terms of assembly, homodimer.

Its subcellular location is the cytoplasm. The catalysed reaction is D-fructose 6-phosphate + L-glutamine = D-glucosamine 6-phosphate + L-glutamate. Its function is as follows. Catalyzes the first step in hexosamine metabolism, converting fructose-6P into glucosamine-6P using glutamine as a nitrogen source. The protein is Glutamine--fructose-6-phosphate aminotransferase [isomerizing] of Bacillus subtilis (strain 168).